The sequence spans 506 residues: Maturase K (506 aa).

This sequence belongs to the intron maturase 2 family. MatK subfamily.

The protein resides in the plastid. The protein localises to the chloroplast. In terms of biological role, usually encoded in the trnK tRNA gene intron. Probably assists in splicing its own and other chloroplast group II introns. This is Maturase K from Trifolium willdenovii (Tomcat clover).